The chain runs to 156 residues: Gamma-L-glutamyl-butirosin B gamma-glutamyl cyclotransferase (156 aa).

Residue 24-27 (YGTL) coordinates substrate. Glu-89 acts as the Proton acceptor in catalysis.

The protein belongs to the gamma-glutamylcyclotransferase family.

The catalysed reaction is gamma-L-glutamyl-butirosin B = butirosin B + 5-oxo-L-proline. Its pathway is antibiotic biosynthesis; butirosin biosynthesis. Its function is as follows. Cyclotransferase that catalyzes the last step in the biosynthesis of the aminoglycoside antibiotic butirosin B. Cleaves the amide bond via transamidation using the alpha-amine of the terminal gamma-L-glutamate of the side chain, releasing it as the cyclic 5-oxoproline. This Niallia circulans (Bacillus circulans) protein is Gamma-L-glutamyl-butirosin B gamma-glutamyl cyclotransferase (btrG).